Here is an 855-residue protein sequence, read N- to C-terminus: DNA mismatch repair protein MutS (855 aa).

613 to 620 is an ATP binding site; the sequence is GPNMGGKS. The disordered stretch occupies residues 796–817; it reads TTSLPHEQPRAKPGKPAIPQQS.

This sequence belongs to the DNA mismatch repair MutS family.

Its function is as follows. This protein is involved in the repair of mismatches in DNA. It is possible that it carries out the mismatch recognition step. This protein has a weak ATPase activity. The chain is DNA mismatch repair protein MutS from Pseudomonas syringae pv. tomato (strain ATCC BAA-871 / DC3000).